Reading from the N-terminus, the 496-residue chain is Beta-amylase (496 aa).

Residues Asp-54, His-94, and Asp-102 each coordinate substrate. The active-site Proton donor is the Glu-187. Substrate contacts are provided by Lys-296, His-301, and Thr-343. Glu-381 functions as the Proton acceptor in the catalytic mechanism. Residues 382 to 383 (NA) and Arg-421 contribute to the substrate site. Positions 455-496 (YNHGIPPLKRSGPKIPDDVLNEATKPIPPFPWDSETDMKVDG) are disordered.

Belongs to the glycosyl hydrolase 14 family.

The enzyme catalyses Hydrolysis of (1-&gt;4)-alpha-D-glucosidic linkages in polysaccharides so as to remove successive maltose units from the non-reducing ends of the chains.. This Medicago sativa (Alfalfa) protein is Beta-amylase (BMY1).